Consider the following 828-residue polypeptide: Protein kintoun (828 aa).

Disordered regions lie at residues 1–31 (MSGSTASARNKHSKGNLKHNNNKNKNNDEPI), 223–250 (KNPTDEELEPHPLEHSFPTKPTAGEGEP), 383–424 (DSGV…PTSN), 556–668 (APVQ…HRGI), and 741–828 (KKNQ…EDLI). Basic residues predominate over residues 9–22 (RNKHSKGNLKHNNN). S384 bears the Phosphoserine mark. Residues 395–414 (PVEEEEDGEDEIEAEEEEEE) are compositionally biased toward acidic residues. Basic and acidic residues predominate over residues 556 to 573 (APVQEDKPGDIQFKRNDQ). Over residues 591–601 (EREEGEIEEAE) the composition is skewed to acidic residues. The segment covering 606 to 620 (KKSASKKQRGKRNKK) has biased composition (basic residues). Residues 625 to 641 (SESACVSLPTSVDSQPM) are compositionally biased toward polar residues. A compositionally biased stretch (basic residues) spans 741 to 755 (KKNQKRRDCKLRAQQ). S759 is modified (phosphoserine). A compositionally biased stretch (basic and acidic residues) spans 788–808 (DSGLDLTRHNKKRELAEEADN). Over residues 815–828 (EMDDDDDDEDEDLI) the composition is skewed to acidic residues.

The protein belongs to the PIH1 family. Kintoun subfamily. Interacts with Pp1alpha-96A, Pp1-87B, Pp1-13C and flw.

It localises to the cytoplasm. Functionally, required for cytoplasmic pre-assembly of axonemal dyneins, thereby playing a central role in motility in cilia and flagella. Involved in pre-assembly of dynein arm complexes in the cytoplasm before intraflagellar transport loads them for the ciliary compartment. This chain is Protein kintoun, found in Drosophila willistoni (Fruit fly).